A 374-amino-acid polypeptide reads, in one-letter code: Glutamate 5-kinase (374 aa).

Lysine 16 provides a ligand contact to ATP. The substrate site is built by serine 56, aspartate 143, and asparagine 155. 175 to 176 is an ATP binding site; sequence TD. The 79-residue stretch at 282–360 folds into the PUA domain; it reads RGRVVLDAGA…SEIEAVLGYV (79 aa).

Belongs to the glutamate 5-kinase family.

The protein localises to the cytoplasm. The catalysed reaction is L-glutamate + ATP = L-glutamyl 5-phosphate + ADP. It functions in the pathway amino-acid biosynthesis; L-proline biosynthesis; L-glutamate 5-semialdehyde from L-glutamate: step 1/2. Functionally, catalyzes the transfer of a phosphate group to glutamate to form L-glutamate 5-phosphate. This is Glutamate 5-kinase from Ralstonia nicotianae (strain ATCC BAA-1114 / GMI1000) (Ralstonia solanacearum).